We begin with the raw amino-acid sequence, 166 residues long: UBA-like domain-containing protein 2 (166 aa).

A disordered region spans residues 120-166 (QQPVWLPPASPTTHLHHHHHHPQPVWPPNSQPTGGPQKAMAAMDGQR).

This sequence belongs to the UBALD family.

The polypeptide is UBA-like domain-containing protein 2 (ubald2) (Xenopus tropicalis (Western clawed frog)).